The following is a 179-amino-acid chain: RNA pyrophosphohydrolase (179 aa).

In terms of domain architecture, Nudix hydrolase spans 6–149 (GYRANVGIVI…KKPIYEDMLK (144 aa)). The short motif at 38-59 (GGIDFGESELDALFRELNEEIG) is the Nudix box element.

This sequence belongs to the Nudix hydrolase family. RppH subfamily. A divalent metal cation is required as a cofactor.

Its function is as follows. Accelerates the degradation of transcripts by removing pyrophosphate from the 5'-end of triphosphorylated RNA, leading to a more labile monophosphorylated state that can stimulate subsequent ribonuclease cleavage. This Ruthia magnifica subsp. Calyptogena magnifica protein is RNA pyrophosphohydrolase.